The sequence spans 370 residues: 3,5-dihydroxyphenylacetyl-CoA synthase (370 aa).

Residue C158 is part of the active site.

It belongs to the thiolase-like superfamily. Chalcone/stilbene synthases family.

The catalysed reaction is 4 malonyl-CoA + 4 H(+) = (3,5-dihydroxyphenyl)acetyl-CoA + 4 CO2 + 3 CoA + H2O. It functions in the pathway antibiotic biosynthesis; vancomycin biosynthesis. Involved in the biosynthesis of the nonproteinogenic amino acid monomer (S)-3,5-dihydroxyphenylglycine (Dpg) responsible of the production of vancomycin and teicoplanin antibiotics. Catalyzes the Claisen condensation of four molecules of malonyl-CoA to yield 3,5-dihydroxyphenylacetyl-CoA (DPA-CoA) and three free coenzyme A (CoA). DpgA requires the presence of the dehydratases DpgB and DpgD to facilitate the aromatization of the DPA-S-DgpA or DPA-S-CoA intermediate. This is 3,5-dihydroxyphenylacetyl-CoA synthase (dpgA) from Amycolatopsis orientalis (Nocardia orientalis).